Here is a 616-residue protein sequence, read N- to C-terminus: Proline--tRNA ligase (616 aa).

This sequence belongs to the class-II aminoacyl-tRNA synthetase family. ProS type 1 subfamily. As to quaternary structure, homodimer.

It is found in the cytoplasm. The catalysed reaction is tRNA(Pro) + L-proline + ATP = L-prolyl-tRNA(Pro) + AMP + diphosphate. In terms of biological role, catalyzes the attachment of proline to tRNA(Pro) in a two-step reaction: proline is first activated by ATP to form Pro-AMP and then transferred to the acceptor end of tRNA(Pro). As ProRS can inadvertently accommodate and process non-cognate amino acids such as alanine and cysteine, to avoid such errors it has two additional distinct editing activities against alanine. One activity is designated as 'pretransfer' editing and involves the tRNA(Pro)-independent hydrolysis of activated Ala-AMP. The other activity is designated 'posttransfer' editing and involves deacylation of mischarged Ala-tRNA(Pro). The misacylated Cys-tRNA(Pro) is not edited by ProRS. In Lactococcus lactis subsp. cremoris (strain MG1363), this protein is Proline--tRNA ligase.